We begin with the raw amino-acid sequence, 308 residues long: Acetyl-coenzyme A carboxylase carboxyl transferase subunit beta (308 aa).

A CoA carboxyltransferase N-terminal domain is found at 25–294 (VWTKCTSCEQ…PLVVSVNDSP (270 aa)). Zn(2+) is bound by residues cysteine 29, cysteine 32, cysteine 48, and cysteine 51. Residues 29–51 (CTSCEQVLYHAELERNLEVCPKC) form a C4-type zinc finger.

This sequence belongs to the AccD/PCCB family. As to quaternary structure, acetyl-CoA carboxylase is a heterohexamer composed of biotin carboxyl carrier protein (AccB), biotin carboxylase (AccC) and two subunits each of ACCase subunit alpha (AccA) and ACCase subunit beta (AccD). Zn(2+) serves as cofactor.

Its subcellular location is the cytoplasm. The enzyme catalyses N(6)-carboxybiotinyl-L-lysyl-[protein] + acetyl-CoA = N(6)-biotinyl-L-lysyl-[protein] + malonyl-CoA. The protein operates within lipid metabolism; malonyl-CoA biosynthesis; malonyl-CoA from acetyl-CoA: step 1/1. Component of the acetyl coenzyme A carboxylase (ACC) complex. Biotin carboxylase (BC) catalyzes the carboxylation of biotin on its carrier protein (BCCP) and then the CO(2) group is transferred by the transcarboxylase to acetyl-CoA to form malonyl-CoA. This chain is Acetyl-coenzyme A carboxylase carboxyl transferase subunit beta, found in Vibrio vulnificus (strain CMCP6).